Reading from the N-terminus, the 106-residue chain is Large ribosomal subunit protein bL21 (106 aa).

Belongs to the bacterial ribosomal protein bL21 family. In terms of assembly, part of the 50S ribosomal subunit. Contacts protein L20.

Functionally, this protein binds to 23S rRNA in the presence of protein L20. The sequence is that of Large ribosomal subunit protein bL21 from Fervidobacterium nodosum (strain ATCC 35602 / DSM 5306 / Rt17-B1).